Here is a 1142-residue protein sequence, read N- to C-terminus: Fibronectin type-III domain-containing protein 3A (1142 aa).

Residues 104–191 (YGDVDAHSTH…KSGKGKGGTQ (88 aa)) are disordered. Basic and acidic residues predominate over residues 107 to 145 (VDAHSTHGRSNFRDERSSKTYERLQKKLKDRQGTQKDKM). Low complexity predominate over residues 146–158 (SSPPSSPQKCPSP). Phosphoserine occurs at positions 147, 151, and 157. 9 Fibronectin type-III domains span residues 212 to 313 (NIVK…TLSC), 317 to 409 (IPNP…TSGC), 413 to 506 (MPAS…TCPD), 510 to 604 (IPVK…TPAV), 608 to 701 (PCLP…TAPG), 705 to 795 (QCKP…TPPS), 805 to 894 (EISD…TKPL), 895 to 989 (PPDP…TPKS), and 990 to 1095 (VPAA…TEPP). Lysine 328 carries the post-translational modification N6-acetyllysine. Residues 1121–1141 (NLVLFAFFSILIAFIIQYFVI) traverse the membrane as a helical segment.

It belongs to the FNDC3 family.

Its subcellular location is the golgi apparatus membrane. Mediates spermatid-Sertoli adhesion during spermatogenesis. In Pongo abelii (Sumatran orangutan), this protein is Fibronectin type-III domain-containing protein 3A (FNDC3A).